Here is a 507-residue protein sequence, read N- to C-terminus: Pyruvate kinase (507 aa).

Residue R50 participates in substrate binding. K(+)-binding residues include N52, S54, D84, and T85. 52 to 55 provides a ligand contact to ATP; sequence NFSH. ATP-binding residues include R91 and K177. E242 contacts Mg(2+). The substrate site is built by G265, D266, and T298. D266 is a Mg(2+) binding site.

It belongs to the pyruvate kinase family. In terms of assembly, homotetramer. Requires Mg(2+) as cofactor. K(+) serves as cofactor.

It carries out the reaction pyruvate + ATP = phosphoenolpyruvate + ADP + H(+). It functions in the pathway carbohydrate degradation; glycolysis; pyruvate from D-glyceraldehyde 3-phosphate: step 5/5. This Dictyostelium discoideum (Social amoeba) protein is Pyruvate kinase (pyk).